Reading from the N-terminus, the 413-residue chain is ATP phosphoribosyltransferase regulatory subunit (413 aa).

The interval Met1–Pro21 is disordered.

It belongs to the class-II aminoacyl-tRNA synthetase family. HisZ subfamily. As to quaternary structure, heteromultimer composed of HisG and HisZ subunits.

The protein resides in the cytoplasm. It participates in amino-acid biosynthesis; L-histidine biosynthesis; L-histidine from 5-phospho-alpha-D-ribose 1-diphosphate: step 1/9. In terms of biological role, required for the first step of histidine biosynthesis. May allow the feedback regulation of ATP phosphoribosyltransferase activity by histidine. The protein is ATP phosphoribosyltransferase regulatory subunit of Rubrobacter xylanophilus (strain DSM 9941 / JCM 11954 / NBRC 16129 / PRD-1).